The sequence spans 177 residues: Large ribosomal subunit protein uL10 (177 aa).

This sequence belongs to the universal ribosomal protein uL10 family. Part of the ribosomal stalk of the 50S ribosomal subunit. The N-terminus interacts with L11 and the large rRNA to form the base of the stalk. The C-terminus forms an elongated spine to which L12 dimers bind in a sequential fashion forming a multimeric L10(L12)X complex.

Functionally, forms part of the ribosomal stalk, playing a central role in the interaction of the ribosome with GTP-bound translation factors. The protein is Large ribosomal subunit protein uL10 of Leptospira biflexa serovar Patoc (strain Patoc 1 / Ames).